Consider the following 135-residue polypeptide: Large ribosomal subunit protein uL16c (135 aa).

M1 is subject to N-methylmethionine.

As to quaternary structure, component of the chloroplast large ribosomal subunit (LSU). Mature 70S chloroplast ribosomes of higher plants consist of a small (30S) and a large (50S) subunit. The 30S small subunit contains 1 molecule of ribosomal RNA (16S rRNA) and 24 different proteins. The 50S large subunit contains 3 rRNA molecules (23S, 5S and 4.5S rRNA) and 33 different proteins. In terms of processing, partially alpha-N-monomethylated at Met-1 (10%), whereas 90% of it is blocked to Edman degradation, probably by trimethylation.

It localises to the plastid. Its subcellular location is the chloroplast. Component of the chloroplast ribosome (chloro-ribosome), a dedicated translation machinery responsible for the synthesis of chloroplast genome-encoded proteins, including proteins of the transcription and translation machinery and components of the photosynthetic apparatus. The polypeptide is Large ribosomal subunit protein uL16c (Spinacia oleracea (Spinach)).